A 276-amino-acid polypeptide reads, in one-letter code: SKA complex subunit 1 homolog (276 aa).

Positions 48 to 78 (VDVSLTAMEAQLQAVRRRLQEEREAFPKAKK) form a coiled coil.

Belongs to the SKA1 family.

In Oryza sativa subsp. indica (Rice), this protein is SKA complex subunit 1 homolog.